An 82-amino-acid polypeptide reads, in one-letter code: uncharacterized protein (82 aa).

The span at 55 to 64 (DQNTAPSTPS) shows a compositional bias: polar residues. A disordered region spans residues 55–82 (DQNTAPSTPSKILPKRLPSQSNLNNNNN).

This is an uncharacterized protein from Dictyostelium discoideum (Social amoeba).